The primary structure comprises 611 residues: BTB/POZ domain-containing protein 9 (611 aa).

A BTB domain is found at Gly-36–Asp-104. The region spanning Val-142–Arg-240 is the BACK domain. The tract at residues Gln-560–Gln-611 is disordered. The span at Ala-586–Gln-611 shows a compositional bias: low complexity.

This is BTB/POZ domain-containing protein 9 (BTBD9) from Bos taurus (Bovine).